The chain runs to 428 residues: MKKKLNLCPKGTYDFFGQGAKIFIDVRKVFFNQAKKFNFSYIETPIFEYANIFLTTNQIADIVSKELYKFFDKSGRELALRPEGTAPIMRSVAQHKLFQTEKKFFYFGPMFRYENPQKGRFRQFYQAGFEIINYKKDSLEFQILEIILLIKSIFKDLGINEYELKINFLSNLTTRNIYEKNLAQYFEKFSDKLEPISKIRIKKNPLRILDDKIEQEKEFVKLAPKINTFWTMEDKNIFNRITSILEEFKISYKVDYNLVRGLDYYDDFVFEFIDTSQTLGTKLALVGGGCYNNLPTKFGLNNFKSIGMAFGIERLIEILKSKKNIKEQNLDFFLLSFTDKEILLNFKLAKILRKENFLVDLNKTPFSVSKGFQLAKKSGAKFVFFFEKNQAKNYISLKNLQTGKNEQILYTEINFEYLNSIIKASENA.

This sequence belongs to the class-II aminoacyl-tRNA synthetase family. In terms of assembly, homodimer.

Its subcellular location is the cytoplasm. The catalysed reaction is tRNA(His) + L-histidine + ATP = L-histidyl-tRNA(His) + AMP + diphosphate + H(+). The polypeptide is Histidine--tRNA ligase (Mesomycoplasma hyopneumoniae (strain J / ATCC 25934 / NCTC 10110) (Mycoplasma hyopneumoniae)).